The following is a 360-amino-acid chain: Holliday junction branch migration complex subunit RuvB (360 aa).

The tract at residues 1–46 (MAIKRSGNSDRPAKNPSSTPGTNAPTLLSPTPTHQEKETSEEKIRP) is disordered. A large ATPase domain (RuvB-L) region spans residues 13-205 (AKNPSSTPGT…FGLIQRLRFY (193 aa)). Residues 15 to 33 (NPSSTPGTNAPTLLSPTPT) show a composition bias toward polar residues. Positions 34–46 (HQEKETSEEKIRP) are enriched in basic and acidic residues. Residues Ile44, Arg45, Gly86, Lys89, Thr90, Thr91, 152–154 (EDY), Arg195, Tyr205, and Arg242 each bind ATP. Residue Thr90 coordinates Mg(2+). Residues 206-276 (EVDELTLIVL…LASEALDIYQ (71 aa)) form a small ATPAse domain (RuvB-S) region. The head domain (RuvB-H) stretch occupies residues 279-360 (KQGLDWIDRL…LTSEEQLSIF (82 aa)). The DNA site is built by Arg334 and Arg339.

The protein belongs to the RuvB family. In terms of assembly, homohexamer. Forms an RuvA(8)-RuvB(12)-Holliday junction (HJ) complex. HJ DNA is sandwiched between 2 RuvA tetramers; dsDNA enters through RuvA and exits via RuvB. An RuvB hexamer assembles on each DNA strand where it exits the tetramer. Each RuvB hexamer is contacted by two RuvA subunits (via domain III) on 2 adjacent RuvB subunits; this complex drives branch migration. In the full resolvosome a probable DNA-RuvA(4)-RuvB(12)-RuvC(2) complex forms which resolves the HJ.

It is found in the cytoplasm. It carries out the reaction ATP + H2O = ADP + phosphate + H(+). The RuvA-RuvB-RuvC complex processes Holliday junction (HJ) DNA during genetic recombination and DNA repair, while the RuvA-RuvB complex plays an important role in the rescue of blocked DNA replication forks via replication fork reversal (RFR). RuvA specifically binds to HJ cruciform DNA, conferring on it an open structure. The RuvB hexamer acts as an ATP-dependent pump, pulling dsDNA into and through the RuvAB complex. RuvB forms 2 homohexamers on either side of HJ DNA bound by 1 or 2 RuvA tetramers; 4 subunits per hexamer contact DNA at a time. Coordinated motions by a converter formed by DNA-disengaged RuvB subunits stimulates ATP hydrolysis and nucleotide exchange. Immobilization of the converter enables RuvB to convert the ATP-contained energy into a lever motion, pulling 2 nucleotides of DNA out of the RuvA tetramer per ATP hydrolyzed, thus driving DNA branch migration. The RuvB motors rotate together with the DNA substrate, which together with the progressing nucleotide cycle form the mechanistic basis for DNA recombination by continuous HJ branch migration. Branch migration allows RuvC to scan DNA until it finds its consensus sequence, where it cleaves and resolves cruciform DNA. In Rippkaea orientalis (strain PCC 8801 / RF-1) (Cyanothece sp. (strain PCC 8801)), this protein is Holliday junction branch migration complex subunit RuvB.